The following is a 526-amino-acid chain: Phenylacetaldehyde oxime monooxygenase CYP71AN24 (526 aa).

The helical transmembrane segment at 22–42 threads the bilayer; it reads SFNIFLVPILCLSIFILFSLT. Heme is bound at residue Cys465.

It belongs to the cytochrome P450 family. Requires heme as cofactor. Expressed in seedlings and leaves.

The protein localises to the membrane. It catalyses the reaction (E)-phenylacetaldehyde oxime + reduced [NADPH--hemoprotein reductase] + O2 = (R)-mandelonitrile + oxidized [NADPH--hemoprotein reductase] + 2 H2O + H(+). The enzyme catalyses phenylacetonitrile + reduced [NADPH--hemoprotein reductase] + O2 = (R)-mandelonitrile + oxidized [NADPH--hemoprotein reductase] + H2O + H(+). Involved in L-phenylalanine-derived cyanogenic glycoside biosynthesis, including prunasin and amygdalin defensive agents. Catalyzes the conversion of phenylacetaldoxime (PAOx) and phenylacetonitrile (PAN) into mandelonitrile (MAN). To a lower extent, can convert various aromatic aldoximes and nitriles; mediates the transformation of 4-hydroxyphenylacetaldoxime, 4-hydroxyphenylacetonitrile, indole-3-acetal-doxime and indole-3-acetonitrile into the corresponding hydroxynitriles, but cannot use the aliphatic compounds 2-methylpropanaloxime and 2-methylpropanenitrile as substrates. This chain is Phenylacetaldehyde oxime monooxygenase CYP71AN24, found in Prunus mume (Japanese apricot).